Consider the following 100-residue polypeptide: Large ribosomal subunit protein eL21 (100 aa).

The span at 1–21 shows a compositional bias: basic residues; sequence MVKRTHGYRYKSRKLLRKKPR. The segment at 1–22 is disordered; it reads MVKRTHGYRYKSRKLLRKKPRE.

Belongs to the eukaryotic ribosomal protein eL21 family.

The protein is Large ribosomal subunit protein eL21 of Pyrobaculum neutrophilum (strain DSM 2338 / JCM 9278 / NBRC 100436 / V24Sta) (Thermoproteus neutrophilus).